The chain runs to 217 residues: Small ribosomal subunit protein uS3 (217 aa).

The KH type-2 domain occupies 38 to 106; the sequence is IRKYIEQRLA…RVHINIIEIK (69 aa).

Belongs to the universal ribosomal protein uS3 family. As to quaternary structure, part of the 30S ribosomal subunit. Forms a tight complex with proteins S10 and S14.

In terms of biological role, binds the lower part of the 30S subunit head. Binds mRNA in the 70S ribosome, positioning it for translation. In Lactiplantibacillus plantarum (strain ATCC BAA-793 / NCIMB 8826 / WCFS1) (Lactobacillus plantarum), this protein is Small ribosomal subunit protein uS3.